The sequence spans 430 residues: 4-hydroxy-3-methylbut-2-en-1-yl diphosphate synthase (flavodoxin) (430 aa).

4 residues coordinate [4Fe-4S] cluster: Cys310, Cys313, Cys356, and Glu363.

Belongs to the IspG family. [4Fe-4S] cluster is required as a cofactor.

It catalyses the reaction (2E)-4-hydroxy-3-methylbut-2-enyl diphosphate + oxidized [flavodoxin] + H2O + 2 H(+) = 2-C-methyl-D-erythritol 2,4-cyclic diphosphate + reduced [flavodoxin]. The protein operates within isoprenoid biosynthesis; isopentenyl diphosphate biosynthesis via DXP pathway; isopentenyl diphosphate from 1-deoxy-D-xylulose 5-phosphate: step 5/6. Functionally, converts 2C-methyl-D-erythritol 2,4-cyclodiphosphate (ME-2,4cPP) into 1-hydroxy-2-methyl-2-(E)-butenyl 4-diphosphate. The protein is 4-hydroxy-3-methylbut-2-en-1-yl diphosphate synthase (flavodoxin) of Nitrobacter winogradskyi (strain ATCC 25391 / DSM 10237 / CIP 104748 / NCIMB 11846 / Nb-255).